A 502-amino-acid polypeptide reads, in one-letter code: Probable cytochrome P450 6a23 (502 aa).

Cys445 serves as a coordination point for heme.

This sequence belongs to the cytochrome P450 family. It depends on heme as a cofactor.

It is found in the endoplasmic reticulum membrane. Its subcellular location is the microsome membrane. Functionally, may be involved in the metabolism of insect hormones and in the breakdown of synthetic insecticides. The sequence is that of Probable cytochrome P450 6a23 (Cyp6a23) from Drosophila melanogaster (Fruit fly).